We begin with the raw amino-acid sequence, 453 residues long: Malate dehydrogenase [NADP], chloroplastic (453 aa).

The N-terminal 68 residues, M1–C68, are a transit peptide targeting the chloroplast. Cysteines 88 and 93 form a disulfide. G117–S123 provides a ligand contact to NADP(+). The substrate site is built by R198 and R204. Residues N211, Q218, and V235–N237 contribute to the NADP(+) site. Positions 237 and 268 each coordinate substrate. H293 functions as the Proton acceptor in the catalytic mechanism. C429 and C441 form a disulfide bridge.

The protein belongs to the LDH/MDH superfamily. MDH type 2 family. Homodimer.

Its subcellular location is the plastid. The protein resides in the chloroplast. The catalysed reaction is (S)-malate + NADP(+) = oxaloacetate + NADPH + H(+). With respect to regulation, chloroplast NADP-MDH is activated upon illumination. In order to be enzymatically active, disulfide bridges on the protein must be reduced by thioredoxin which receives electrons from ferredoxin and the electron transport system of photosynthesis. Functionally, the chloroplastic, NADP-dependent form is essential for the photosynthesis C4 cycle, which allows plants to circumvent the problem of photorespiration. In C4 plants, NADP-MDH activity acts to convert oxaloacetate to malate in chloroplasts of mesophyll cells for transport to the bundle sheath cells. This chain is Malate dehydrogenase [NADP], chloroplastic, found in Flaveria bidentis (Coastal plain yellowtops).